Here is a 91-residue protein sequence, read N- to C-terminus: PqqA binding protein (91 aa).

The protein belongs to the PqqD family. In terms of assembly, monomer. Interacts with PqqE.

It functions in the pathway cofactor biosynthesis; pyrroloquinoline quinone biosynthesis. Functionally, functions as a PqqA binding protein and presents PqqA to PqqE, in the pyrroloquinoline quinone (PQQ) biosynthetic pathway. The protein is PqqA binding protein of Pseudomonas entomophila (strain L48).